The sequence spans 508 residues: Photosystem II CP47 reaction center protein (508 aa).

The next 6 helical transmembrane spans lie at 21-36, 101-115, 140-156, 203-218, 237-252, and 457-472; these read AVHIMHTALVSGWAGS, IVFSGLCFLAAIWHW, GIHLFLAGVACFGFGAF, IAAGTLGILAGLFHLS, VLSSSIAAVFFAAFVV, and TFALLFFFGHIWHGAR.

Belongs to the PsbB/PsbC family. PsbB subfamily. PSII is composed of 1 copy each of membrane proteins PsbA, PsbB, PsbC, PsbD, PsbE, PsbF, PsbH, PsbI, PsbJ, PsbK, PsbL, PsbM, PsbT, PsbX, PsbY, PsbZ, Psb30/Ycf12, at least 3 peripheral proteins of the oxygen-evolving complex and a large number of cofactors. It forms dimeric complexes. The cofactor is Binds multiple chlorophylls. PSII binds additional chlorophylls, carotenoids and specific lipids..

The protein resides in the plastid. It localises to the chloroplast thylakoid membrane. In terms of biological role, one of the components of the core complex of photosystem II (PSII). It binds chlorophyll and helps catalyze the primary light-induced photochemical processes of PSII. PSII is a light-driven water:plastoquinone oxidoreductase, using light energy to abstract electrons from H(2)O, generating O(2) and a proton gradient subsequently used for ATP formation. The protein is Photosystem II CP47 reaction center protein of Brachypodium distachyon (Purple false brome).